A 325-amino-acid chain; its full sequence is Glutarate 2-hydroxylase (325 aa).

Residues His160, Asp162, and His292 each contribute to the Fe cation site.

The protein belongs to the glutarate hydroxylase family. As to quaternary structure, homotetramer. Fe(2+) serves as cofactor.

It carries out the reaction glutarate + 2-oxoglutarate + O2 = (S)-2-hydroxyglutarate + succinate + CO2. It participates in amino-acid degradation. Its function is as follows. Acts as an alpha-ketoglutarate-dependent dioxygenase catalyzing hydroxylation of glutarate (GA) to L-2-hydroxyglutarate (L2HG). Functions in a L-lysine degradation pathway that proceeds via cadaverine, glutarate and L-2-hydroxyglutarate. The sequence is that of Glutarate 2-hydroxylase from Escherichia coli O127:H6 (strain E2348/69 / EPEC).